A 255-amino-acid chain; its full sequence is Probable iron chelatin transport ATP-binding protein jhp_0821 (255 aa).

Residues 3–240 (LEVKNLSFKY…HNLSALYDTP (238 aa)) form the ABC transporter domain. 35–42 (APNGSGKT) lines the ATP pocket.

It belongs to the ABC transporter superfamily.

The protein localises to the cell inner membrane. Functionally, part of a binding-protein-dependent transport system for an iron chelatin. Probably responsible for energy coupling to the transport system (Potential). This chain is Probable iron chelatin transport ATP-binding protein jhp_0821, found in Helicobacter pylori (strain J99 / ATCC 700824) (Campylobacter pylori J99).